Consider the following 354-residue polypeptide: MGKVLAAALVGIAAALAAERLLAFRNRLNATREVDPVALPNCYLIKGIETGSEDIDILPNGLAFISSGLKYPGLKSFAPDKPGEIFLMDLNEKKPKASELRISRGFDVGSFNPHGISTYIDKDDTVYLFVVNHPHQKSTVELFKFMEDDNSLVHLKTIRHDLLTSVNDVVAVGPDSFYATNDHYFYDFILMFLEMYLGLTWSNVVYYSPKEVKEVAAGFYSANGINISPDKKYIYIADILDHNVHVMEKHADWNLTHVKTLQLDTLADNLSVDPDTGDIWTGCHPNGMKLFYDDPDNPPASEVLRIQNILAEQPTVTRVYAENGSVLQGTSVATVYDGKLLIGTVFHRALYCEL.

A glycan (N-linked (GlcNAc...) asparagine) is linked at Asn-29. A disulfide bond links Cys-42 and Cys-352. Ca(2+)-binding residues include Glu-53 and Asp-54. Residue His-114 is the Proton acceptor of the active site. The Ca(2+) site is built by Ile-116, Asn-167, Asp-168, and Asn-223. Asn-254 is a glycosylation site (N-linked (GlcNAc...) asparagine). Positions 268 and 269 each coordinate Ca(2+). Residues Asn-269 and Asn-323 are each glycosylated (N-linked (GlcNAc...) asparagine).

This sequence belongs to the paraoxonase family. Ca(2+) serves as cofactor. In terms of processing, glycosylated. Post-translationally, the signal sequence is not cleaved.

It localises to the membrane. It catalyses the reaction a phenyl acetate + H2O = a phenol + acetate + H(+). The enzyme catalyses An aryl dialkyl phosphate + H2O = dialkyl phosphate + an aryl alcohol.. Its function is as follows. The absence of paraoxonase activity in turkey and chicken blood and in turkey liver indicates that PON2, if expressed, does not hydrolyze paraoxon. This Gallus gallus (Chicken) protein is Serum paraoxonase/arylesterase 2 (PON2).